The primary structure comprises 680 residues: DNA-directed RNA polymerase subunit beta' (680 aa).

4 residues coordinate Zn(2+): Cys-69, Cys-71, Cys-87, and Cys-90. Mg(2+) is bound by residues Asp-489, Asp-491, and Asp-493.

Belongs to the RNA polymerase beta' chain family. RpoC1 subfamily. In terms of assembly, in plastids the minimal PEP RNA polymerase catalytic core is composed of four subunits: alpha, beta, beta', and beta''. When a (nuclear-encoded) sigma factor is associated with the core the holoenzyme is formed, which can initiate transcription. The cofactor is Mg(2+). Zn(2+) serves as cofactor.

The protein localises to the plastid. Its subcellular location is the chloroplast. It catalyses the reaction RNA(n) + a ribonucleoside 5'-triphosphate = RNA(n+1) + diphosphate. Its function is as follows. DNA-dependent RNA polymerase catalyzes the transcription of DNA into RNA using the four ribonucleoside triphosphates as substrates. The protein is DNA-directed RNA polymerase subunit beta' of Lepidium virginicum (Virginia pepperweed).